The primary structure comprises 316 residues: 4-hydroxy-3-methylbut-2-enyl diphosphate reductase (316 aa).

Position 12 (C12) interacts with [4Fe-4S] cluster. Positions 41 and 74 each coordinate (2E)-4-hydroxy-3-methylbut-2-enyl diphosphate. H41 and H74 together coordinate dimethylallyl diphosphate. Positions 41 and 74 each coordinate isopentenyl diphosphate. C96 contributes to the [4Fe-4S] cluster binding site. H124 serves as a coordination point for (2E)-4-hydroxy-3-methylbut-2-enyl diphosphate. Position 124 (H124) interacts with dimethylallyl diphosphate. H124 contributes to the isopentenyl diphosphate binding site. The active-site Proton donor is E126. Position 167 (T167) interacts with (2E)-4-hydroxy-3-methylbut-2-enyl diphosphate. C197 is a binding site for [4Fe-4S] cluster. Positions 225, 226, 227, and 269 each coordinate (2E)-4-hydroxy-3-methylbut-2-enyl diphosphate. Dimethylallyl diphosphate is bound by residues S225, S226, N227, and S269. Positions 225, 226, 227, and 269 each coordinate isopentenyl diphosphate.

Belongs to the IspH family. In terms of assembly, homodimer. [4Fe-4S] cluster is required as a cofactor.

It carries out the reaction isopentenyl diphosphate + 2 oxidized [2Fe-2S]-[ferredoxin] + H2O = (2E)-4-hydroxy-3-methylbut-2-enyl diphosphate + 2 reduced [2Fe-2S]-[ferredoxin] + 2 H(+). The catalysed reaction is dimethylallyl diphosphate + 2 oxidized [2Fe-2S]-[ferredoxin] + H2O = (2E)-4-hydroxy-3-methylbut-2-enyl diphosphate + 2 reduced [2Fe-2S]-[ferredoxin] + 2 H(+). It functions in the pathway isoprenoid biosynthesis; dimethylallyl diphosphate biosynthesis; dimethylallyl diphosphate from (2E)-4-hydroxy-3-methylbutenyl diphosphate: step 1/1. Its pathway is isoprenoid biosynthesis; isopentenyl diphosphate biosynthesis via DXP pathway; isopentenyl diphosphate from 1-deoxy-D-xylulose 5-phosphate: step 6/6. Its function is as follows. Catalyzes the conversion of 1-hydroxy-2-methyl-2-(E)-butenyl 4-diphosphate (HMBPP) into a mixture of isopentenyl diphosphate (IPP) and dimethylallyl diphosphate (DMAPP). Acts in the terminal step of the DOXP/MEP pathway for isoprenoid precursor biosynthesis. The polypeptide is 4-hydroxy-3-methylbut-2-enyl diphosphate reductase (Klebsiella pneumoniae (strain 342)).